We begin with the raw amino-acid sequence, 449 residues long: Serum response factor homolog (449 aa).

The interval 23 to 166 (LADPADMYGN…PPANGKKTKG (144 aa)) is disordered. Positions 69-80 (QCQTLHSPQHAS) are enriched in polar residues. Over residues 81–107 (QQQQQQQQQQQQHQQQQQQQQQHPQQQ) the composition is skewed to low complexity. Ser156 is subject to Phosphoserine. The MADS-box domain maps to 167 to 225 (RVKIKMEYIDNKLRRYTTFSKRKTGIMKKAYELSTLTGTQVMLLVASETGHVYTFATRK). Disordered stretches follow at residues 270–360 (YNIA…GGGS) and 418–449 (LTAS…QEFD). 2 stretches are compositionally biased toward low complexity: residues 317–331 (SAPP…TASS) and 345–354 (TNSGPSTSTA).

As to expression, after germ band retraction, high levels of zygotic expression are observed in a distinct subset of peripheral tracheal cells distributed throughout the embryo and low levels in somatic muscle. Expressed in the future intervein tissue of the wing imaginal disk from the third instar larvae until eclosion of the adult fly (at protein level).

Its subcellular location is the nucleus. Required for the formation of intervein tissue of the wing. Acts in a dosage-dependent manner to suppress wing vein formation and promote development of intervein cells. Might play a role in the proper formation and maintenance of the trachea. This Drosophila melanogaster (Fruit fly) protein is Serum response factor homolog (bs).